Here is a 286-residue protein sequence, read N- to C-terminus: D-tagatose-1,6-bisphosphate aldolase subunit KbaY (286 aa).

The active-site Proton donor is the Asp-82. Residues His-83 and His-180 each contribute to the Zn(2+) site. Gly-181 lines the dihydroxyacetone phosphate pocket. A Zn(2+)-binding site is contributed by His-208. Dihydroxyacetone phosphate contacts are provided by residues 209 to 211 and 230 to 233; these read GAS and NVAT.

It belongs to the class II fructose-bisphosphate aldolase family. TagBP aldolase KbaY subfamily. As to quaternary structure, homotetramer. Forms a complex with KbaZ. The cofactor is Zn(2+).

It carries out the reaction D-tagatofuranose 1,6-bisphosphate = D-glyceraldehyde 3-phosphate + dihydroxyacetone phosphate. Its pathway is carbohydrate metabolism; D-tagatose 6-phosphate degradation; D-glyceraldehyde 3-phosphate and glycerone phosphate from D-tagatose 6-phosphate: step 2/2. Its function is as follows. Catalytic subunit of the tagatose-1,6-bisphosphate aldolase KbaYZ, which catalyzes the reversible aldol condensation of dihydroxyacetone phosphate (DHAP or glycerone-phosphate) with glyceraldehyde 3-phosphate (G3P) to produce tagatose 1,6-bisphosphate (TBP). Requires KbaZ subunit for full activity and stability. The chain is D-tagatose-1,6-bisphosphate aldolase subunit KbaY from Escherichia coli O17:K52:H18 (strain UMN026 / ExPEC).